The primary structure comprises 473 residues: Ribulose bisphosphate carboxylase large chain 3 (473 aa).

Substrate contacts are provided by asparagine 116 and threonine 166. Lysine 168 serves as the catalytic Proton acceptor. Residue lysine 170 participates in substrate binding. Residues lysine 194, aspartate 196, and glutamate 197 each contribute to the Mg(2+) site. Lysine 194 carries the N6-carboxylysine modification. The active-site Proton acceptor is histidine 287. Positions 288, 320, and 372 each coordinate substrate.

Belongs to the RuBisCO large chain family. Type I subfamily. Heterohexadecamer of 8 large chains and 8 small chains. The cofactor is Mg(2+).

It catalyses the reaction 2 (2R)-3-phosphoglycerate + 2 H(+) = D-ribulose 1,5-bisphosphate + CO2 + H2O. It carries out the reaction D-ribulose 1,5-bisphosphate + O2 = 2-phosphoglycolate + (2R)-3-phosphoglycerate + 2 H(+). RuBisCO catalyzes two reactions: the carboxylation of D-ribulose 1,5-bisphosphate, the primary event in carbon dioxide fixation, as well as the oxidative fragmentation of the pentose substrate. Both reactions occur simultaneously and in competition at the same active site. The protein is Ribulose bisphosphate carboxylase large chain 3 of Nitrobacter hamburgensis (strain DSM 10229 / NCIMB 13809 / X14).